A 281-amino-acid polypeptide reads, in one-letter code: Peptidyl-prolyl cis-trans isomerase CYP28, chloroplastic (281 aa).

The N-terminal 24 residues, 1-24, are a transit peptide targeting the chloroplast; it reads MASSSILIPPILTRRNLLLSTTIA. Residues 66 to 268 form the PPIase cyclophilin-type domain; that stretch reads STTPCSDSTP…KTVFISGCGE (203 aa).

Belongs to the cyclophilin-type PPIase family. Post-translationally, S-nytrosylated during the hypersensitive disease resistance response. In terms of tissue distribution, ubiquitous. Not detected in roots.

The protein localises to the plastid. It localises to the chloroplast. The enzyme catalyses [protein]-peptidylproline (omega=180) = [protein]-peptidylproline (omega=0). Functionally, PPIases accelerate the folding of proteins. It catalyzes the cis-trans isomerization of proline imidic peptide bonds in oligopeptides. The protein is Peptidyl-prolyl cis-trans isomerase CYP28, chloroplastic (CYP28) of Arabidopsis thaliana (Mouse-ear cress).